The following is a 172-amino-acid chain: 3-hydroxydecanoyl-[acyl-carrier-protein] dehydratase (172 aa).

The active site involves histidine 71.

It belongs to the thioester dehydratase family. FabA subfamily. Homodimer.

Its subcellular location is the cytoplasm. It catalyses the reaction a (3R)-hydroxyacyl-[ACP] = a (2E)-enoyl-[ACP] + H2O. The enzyme catalyses (3R)-hydroxydecanoyl-[ACP] = (2E)-decenoyl-[ACP] + H2O. The catalysed reaction is (2E)-decenoyl-[ACP] = (3Z)-decenoyl-[ACP]. It participates in lipid metabolism; fatty acid biosynthesis. Functionally, necessary for the introduction of cis unsaturation into fatty acids. Catalyzes the dehydration of (3R)-3-hydroxydecanoyl-ACP to E-(2)-decenoyl-ACP and then its isomerization to Z-(3)-decenoyl-ACP. Can catalyze the dehydratase reaction for beta-hydroxyacyl-ACPs with saturated chain lengths up to 16:0, being most active on intermediate chain length. The sequence is that of 3-hydroxydecanoyl-[acyl-carrier-protein] dehydratase from Brucella abortus (strain S19).